Reading from the N-terminus, the 259-residue chain is Probable metal transport system ATP-binding protein TC_0339 (259 aa).

The 233-residue stretch at 9 to 241 (WAVDDLCVNY…AIFQAYGCEL (233 aa)) folds into the ABC transporter domain. Residue 41 to 48 (GPNGAGKS) coordinates ATP.

Belongs to the ABC transporter superfamily.

The protein resides in the cell inner membrane. Part of an ATP-driven transport system TC_0338/TC_0339/TC_0341/TC_0342 for a metal. Probably responsible for energy coupling to the transport system. The polypeptide is Probable metal transport system ATP-binding protein TC_0339 (Chlamydia muridarum (strain MoPn / Nigg)).